Reading from the N-terminus, the 385-residue chain is Aliphatic amidase expression-regulating protein (385 aa).

Homodimer. Forms a complex with AmiR.

Its function is as follows. Negatively regulates the expression of the aliphatic amidase operon. AmiC functions by inhibiting the action of AmiR at the protein level. It exhibits protein kinase activity. This chain is Aliphatic amidase expression-regulating protein (amiC), found in Pseudomonas aeruginosa (strain ATCC 15692 / DSM 22644 / CIP 104116 / JCM 14847 / LMG 12228 / 1C / PRS 101 / PAO1).